The chain runs to 546 residues: MSSATEPVGVPPAEAPDIHTTAGKLADLYRRNHEAVHAGSERAVAKQHAKGKRTARERIDMLLDEGSFVELDEHARHRSTNFGMDADRPYGDGVVTGWGTVDGRRVCVFSQDFTVFGGSLGEVFGEKIVKVMDLAMKTGCPLVGINDSGGARIQEGVAALGLYAEIFKRNTHASGVIPQISLIMGPCAGGAVYSPAITDFTVMVDQTSHMFITGPDVIKTVTGEDVSFEDLGGARTHNERSGNAHYLATDEDDAISYVKELLSFLPSNNLSSSPVFPGAEVEEGSVADGVGDADLELDALVPDSPNQPYDMREVITRLVDEGEFLEVSALFAPNMLCGFGRIEGASVGVVANQPMQLAGTLDIDASEKAARFVRFCDAFNIPVLTLVDVPGFLPGTGQEWNGIIRRGAKLLYAYAEATVPLVTVITRKAYGGAYDVMGSKHLGADINLAWPTAQIAVMGAQGAANILYRRQLAEAAERGEDVEALRARLQQEYEDTLCNPYVAAERGYVDSVIPPSHTRGHVARALRMLADKREALPAKKHGNIPL.

The tract at residues 1 to 20 (MSSATEPVGVPPAEAPDIHT) is disordered. Residues 21-277 (TAGKLADLYR…NNLSSSPVFP (257 aa)) form the CoA carboxyltransferase N-terminal domain. The interval 21–540 (TAGKLADLYR…DKREALPAKK (520 aa)) is carboxyltransferase. One can recognise a CoA carboxyltransferase C-terminal domain in the interval 292–540 (DADLELDALV…DKREALPAKK (249 aa)).

Belongs to the AccD/PCCB family. Probably a dodecamer composed of six biotin-containing alpha subunits and six beta subunits.

It carries out the reaction propanoyl-CoA + hydrogencarbonate + ATP = (S)-methylmalonyl-CoA + ADP + phosphate + H(+). It participates in metabolic intermediate metabolism; propanoyl-CoA degradation; succinyl-CoA from propanoyl-CoA: step 1/3. In Saccharopolyspora erythraea (strain ATCC 11635 / DSM 40517 / JCM 4748 / NBRC 13426 / NCIMB 8594 / NRRL 2338), this protein is Propionyl-CoA carboxylase beta chain (pccB).